Reading from the N-terminus, the 301-residue chain is Phosphatidylcholine:diacylglycerol cholinephosphotransferase 1 (301 aa).

The tract at residues 1-39 is disordered; it reads MSAAAAETDVSLRRRSNSLNGNHTNGVAIDGTLDNNNRR. Transmembrane regions (helical) follow at residues 88 to 108, 141 to 161, 171 to 191, 202 to 222, and 255 to 275; these read HWIP…EYTL, VLAA…VWTW, IAAL…QLPL, FPVG…GSMI, and GHYT…DSLA. Residues histidine 216, histidine 256, and aspartate 260 contribute to the active site.

Belongs to the phosphatidylcholine:diacylglycerol cholinephosphotransferase family.

It is found in the membrane. It catalyses the reaction 1,2-ditetradecanoyl-sn-glycero-3-phosphocholine + 1,2-di-(9Z-octadecenoyl)-sn-glycerol = 1,2-ditetradecanoyl-sn-glycerol + 1,2-di-(9Z-octadecenoyl)-sn-glycero-3-phosphocholine. Functions as a phosphatidylcholine:diacylglycerol cholinephosphotransferase that catalyzes the transfer of the phosphocholine headgroup from phosphatidylcholine (PC) to diacylglycerol, a major reaction for the transfer of 18:1 into phosphatidylcholine for desaturation and also for the reverse transfer of 18:2 and 18:3 into the triacylglycerols synthesis pathway. This is Phosphatidylcholine:diacylglycerol cholinephosphotransferase 1 from Arabidopsis thaliana (Mouse-ear cress).